Reading from the N-terminus, the 333-residue chain is uncharacterized protein (333 aa).

This is an uncharacterized protein from Ictalurid herpesvirus 1 (strain Auburn) (IcHV-1).